A 72-amino-acid chain; its full sequence is uncharacterized protein (72 aa).

The helical transmembrane segment at Trp11–Phe31 threads the bilayer.

It localises to the membrane. This is an uncharacterized protein from Saccharomyces cerevisiae (strain ATCC 204508 / S288c) (Baker's yeast).